We begin with the raw amino-acid sequence, 418 residues long: AP-3 complex subunit mu-2 (418 aa).

The MHD domain maps to 176–417; sequence NNEAYFDVIE…MTKAGKFQVR (242 aa).

It belongs to the adaptor complexes medium subunit family. In terms of assembly, AP-3 associates with the BLOC-1 complex. Adaptor protein complex 3 (AP-3) is a heterotetramer composed of two large adaptins (delta-type subunit AP3D1 and beta-type subunit AP3B1 or AP3B2), a medium adaptin (mu-type subunit AP3M1 or AP3M2) and a small adaptin (sigma-type subunit APS1 or AP3S2).

The protein resides in the golgi apparatus. It localises to the cytoplasmic vesicle membrane. In terms of biological role, part of the AP-3 complex, an adaptor-related complex which is not clathrin-associated. The complex is associated with the Golgi region as well as more peripheral structures. It facilitates the budding of vesicles from the Golgi membrane and may be directly involved in trafficking to lysosomes. In concert with the BLOC-1 complex, AP-3 is required to target cargos into vesicles assembled at cell bodies for delivery into neurites and nerve terminals. In Homo sapiens (Human), this protein is AP-3 complex subunit mu-2 (AP3M2).